Consider the following 452-residue polypeptide: tRNA modification GTPase MnmE (452 aa).

Arg-22, Glu-80, and Lys-119 together coordinate (6S)-5-formyl-5,6,7,8-tetrahydrofolate. The TrmE-type G domain occupies 213 to 375 (GVRTVIVGKP…LENKIYEKFF (163 aa)). Residue Asn-223 coordinates K(+). GTP-binding positions include 223–228 (NSGKST), 242–248 (TDIPGTT), and 267–270 (DTAG). Ser-227 provides a ligand contact to Mg(2+). K(+)-binding residues include Thr-242, Ile-244, and Thr-247. Thr-248 provides a ligand contact to Mg(2+). Lys-452 contributes to the (6S)-5-formyl-5,6,7,8-tetrahydrofolate binding site.

This sequence belongs to the TRAFAC class TrmE-Era-EngA-EngB-Septin-like GTPase superfamily. TrmE GTPase family. Homodimer. Heterotetramer of two MnmE and two MnmG subunits. The cofactor is K(+).

The protein resides in the cytoplasm. Functionally, exhibits a very high intrinsic GTPase hydrolysis rate. Involved in the addition of a carboxymethylaminomethyl (cmnm) group at the wobble position (U34) of certain tRNAs, forming tRNA-cmnm(5)s(2)U34. This is tRNA modification GTPase MnmE from Petrotoga mobilis (strain DSM 10674 / SJ95).